Reading from the N-terminus, the 312-residue chain is tRNA-dihydrouridine(16) synthase (312 aa).

Residues 7-9 (PME) and Q68 each bind FMN. The Proton donor role is filled by C98. Residues K139, 200–202 (NGE), and 224–225 (GR) contribute to the FMN site.

The protein belongs to the Dus family. DusC subfamily. FMN serves as cofactor.

The enzyme catalyses 5,6-dihydrouridine(16) in tRNA + NADP(+) = uridine(16) in tRNA + NADPH + H(+). It carries out the reaction 5,6-dihydrouridine(16) in tRNA + NAD(+) = uridine(16) in tRNA + NADH + H(+). Catalyzes the synthesis of 5,6-dihydrouridine (D), a modified base found in the D-loop of most tRNAs, via the reduction of the C5-C6 double bond in target uridines. Specifically modifies U16 in tRNAs. The sequence is that of tRNA-dihydrouridine(16) synthase from Yersinia pestis.